Here is a 388-residue protein sequence, read N- to C-terminus: Processive diacylglycerol beta-glucosyltransferase (388 aa).

It belongs to the glycosyltransferase 28 family. UgtP subfamily.

It localises to the cell membrane. It catalyses the reaction a 1,2-diacyl-3-O-(beta-D-glucopyranosyl)-sn-glycerol + UDP-alpha-D-glucose = a 1,2-diacyl-3-O-(beta-D-Glc-(1-&gt;6)-beta-D-Glc)-sn-glycerol + UDP + H(+). The catalysed reaction is a 1,2-diacyl-3-O-(beta-D-Glc-(1-&gt;6)-beta-D-Glc)-sn-glycerol + UDP-alpha-D-glucose = a 1,2-diacyl-3-O-(beta-D-Glc-(1-&gt;6)-beta-D-Glc-(1-&gt;6)-beta-D-Glc)-sn-glycerol + UDP + H(+). The enzyme catalyses a 1,2-diacyl-sn-glycerol + UDP-alpha-D-glucose = a 1,2-diacyl-3-O-(beta-D-glucopyranosyl)-sn-glycerol + UDP + H(+). It participates in glycolipid metabolism; diglucosyl-diacylglycerol biosynthesis. Functionally, processive glucosyltransferase involved in the biosynthesis of both the bilayer- and non-bilayer-forming membrane glucolipids. Is able to successively transfer up to three glucosyl residues to diacylglycerol (DAG), thereby catalyzing the formation of beta-monoglucosyl-DAG (3-O-(beta-D-glucopyranosyl)-1,2-diacyl-sn-glycerol), beta-diglucosyl-DAG (3-O-(beta-D-glucopyranosyl-beta-(1-&gt;6)-D-glucopyranosyl)-1,2-diacyl-sn-glycerol) and beta-triglucosyl-DAG (3-O-(beta-D-glucopyranosyl-beta-(1-&gt;6)-D-glucopyranosyl-beta-(1-&gt;6)-D-glucopyranosyl)-1,2-diacyl-sn-glycerol). Beta-diglucosyl-DAG is the predominant glycolipid found in Bacillales and is also used as a membrane anchor for lipoteichoic acid (LTA). The sequence is that of Processive diacylglycerol beta-glucosyltransferase from Bacillus cereus (strain AH187).